A 335-amino-acid polypeptide reads, in one-letter code: Protein-arginine kinase (335 aa).

The 224-residue stretch at 21–244 (VIISSRIRLA…NQIINEEKQI (224 aa)) folds into the Phosphagen kinase C-terminal domain. ATP is bound by residues 24–28 (SSRIR), H82, R115, 166–170 (RASVM), and 197–202 (RGIYGE).

This sequence belongs to the ATP:guanido phosphotransferase family.

It carries out the reaction L-arginyl-[protein] + ATP = N(omega)-phospho-L-arginyl-[protein] + ADP + H(+). In terms of biological role, catalyzes the specific phosphorylation of arginine residues in proteins. The polypeptide is Protein-arginine kinase (Staphylococcus epidermidis (strain ATCC 12228 / FDA PCI 1200)).